The following is a 292-amino-acid chain: Zinc finger protein OZF (292 aa).

10 C2H2-type zinc fingers span residues Phe16–His38, Phe44–His66, Leu72–His94, Phe100–His122, Phe128–His150, Phe156–His178, Tyr184–His206, Tyr212–His234, Tyr240–His262, and Tyr268–His290. Residues Lys28, Lys51, and Lys56 each participate in a glycyl lysine isopeptide (Lys-Gly) (interchain with G-Cter in SUMO2) cross-link. Residues Lys157 and Lys169 each participate in a glycyl lysine isopeptide (Lys-Gly) (interchain with G-Cter in SUMO) cross-link. A Glycyl lysine isopeptide (Lys-Gly) (interchain with G-Cter in SUMO2) cross-link involves residue Lys173. Residues Tyr212–His292 form an interaction with TERF2IP region.

The protein belongs to the krueppel C2H2-type zinc-finger protein family. Binds DNA. Interacts with SUMO conjugating enzyme UBC9/UBE2I. Interacts with the telomeric protein TERF2IP.

The protein localises to the nucleus. The sequence is that of Zinc finger protein OZF (ZNF146) from Bos taurus (Bovine).